Reading from the N-terminus, the 203-residue chain is Large ribosomal subunit protein uL6 (203 aa).

It belongs to the universal ribosomal protein uL6 family. Part of the 50S ribosomal subunit.

This protein binds to the 23S rRNA, and is important in its secondary structure. It is located near the subunit interface in the base of the L7/L12 stalk, and near the tRNA binding site of the peptidyltransferase center. The protein is Large ribosomal subunit protein uL6 of Hyphomonas neptunium (strain ATCC 15444).